Reading from the N-terminus, the 893-residue chain is ATPase family gene 2 protein homolog A (893 aa).

Over residues 1 to 10 the composition is skewed to basic residues; the sequence is MSSKKNRKRL. Positions 1–26 are disordered; it reads MSSKKNRKRLNQSAENGSSLPSAASS. Residues 1–237 are required for interaction with AFG2B and CINP; that stretch reads MSSKKNRKRL…SLELSLQLSQ (237 aa). The span at 11 to 25 shows a compositional bias: polar residues; the sequence is NQSAENGSSLPSAAS. Threonine 272 carries the phosphothreonine modification. Residues serine 274 and serine 279 each carry the phosphoserine modification. Residues 394–401 and 668–675 each bind ATP; these read GPPGTGKT and GPPGCSKT. Residue lysine 859 forms a Glycyl lysine isopeptide (Lys-Gly) (interchain with G-Cter in SUMO2) linkage.

The protein belongs to the AAA ATPase family. AFG2 subfamily. In terms of assembly, part of the 55LCC heterohexameric ATPase complex composed at least of AIRIM, AFG2A, AFG2B and CINP. Associates with pre-60S ribosomal particles.

It is found in the cytoplasm. Its subcellular location is the mitochondrion. The protein resides in the cytoskeleton. It localises to the spindle. It carries out the reaction ATP + H2O = ADP + phosphate + H(+). Its activity is regulated as follows. AFG2A alone display limited ATPase activity and is not regulated by RNA or DNA binding. In the context of 55LCC heterohexameric ATPase complex, the ATPase activity increases and is stimulated by DNA binding and inhibited in presence of RNA. ATP-dependent chaperone part of the 55LCC heterohexameric ATPase complex which is chromatin-associated and promotes replisome proteostasis to maintain replication fork progression and genome stability. Required for replication fork progression, sister chromatid cohesion, and chromosome stability. The ATPase activity is specifically enhanced by replication fork DNA and is coupled to cysteine protease-dependent cleavage of replisome substrates in response to replication fork damage. Uses ATPase activity to process replisome substrates in S-phase, facilitating their proteolytic turnover from chromatin to ensure DNA replication and mitotic fidelity. Plays an essential role in the cytoplasmic maturation steps of pre-60S ribosomal particles by promoting the release of shuttling protein RSL24D1/RLP24 from the pre-ribosomal particles. May be involved in morphological and functional mitochondrial transformations during spermatogenesis. The polypeptide is ATPase family gene 2 protein homolog A (Homo sapiens (Human)).